We begin with the raw amino-acid sequence, 428 residues long: Synaptotagmin-1 (428 aa).

At 1 to 67 (MDSLLARVKR…KDKLINEIEN (67 aa)) the chain is on the vesicular side. Residues 16–50 (ALNPAQEGVTGGPDAAGLPDVSTSSPGGGGAGDKL) form a disordered region. A helical membrane pass occupies residues 68–92 (LPIWAIVLIIAGSLLFLVCCVYCVC). Residues 93 to 428 (RRSCRKRKKK…HTLQEVPEKN (336 aa)) lie on the Cytoplasmic side of the membrane. Serine 123 carries the phosphoserine; by PRKC2 modification. The tract at residues 147-395 (STKSEVKLGK…PIGRCVLGCN (249 aa)) is phospholipid binding. 2 consecutive C2 domains span residues 153–272 (KLGK…EDWK) and 286–419 (KLGD…AQWH). Residues aspartate 184, aspartate 190, aspartate 242, phenylalanine 243, aspartate 244, serine 247, lysine 248, aspartate 250, aspartate 317, aspartate 323, aspartate 377, and aspartate 379 each contribute to the Ca(2+) site.

Belongs to the synaptotagmin family. In terms of assembly, binds SNAP25. Isoform 3 binds SNAP25 with higher affinity. Ca(2+) is required as a cofactor.

Its subcellular location is the cytoplasmic vesicle. The protein localises to the secretory vesicle. The protein resides in the synaptic vesicle membrane. It localises to the synapse. Its function is as follows. Acts as inhibitor of neurotransmitter release. Overexpression leads to a decrease in the amplitude of the excitatory postsynaptic potential in dissected cholinergic and glutaminergic neurons while depletion with antisense oligonucleotides leads to an increase. Overexpression of isoform 1 blocks the reversal of synaptic depression by serotonin in sensory neurons. In Aplysia californica (California sea hare), this protein is Synaptotagmin-1 (SYT1).